Consider the following 165-residue polypeptide: RNA pyrophosphohydrolase (165 aa).

The Nudix hydrolase domain occupies 13 to 154 (PYRQGVGIML…KRPVYEQVVA (142 aa)). Positions 46 to 67 (GGIDAGEDPETAAWREMEEEIG) match the Nudix box motif.

The protein belongs to the Nudix hydrolase family. RppH subfamily. It depends on a divalent metal cation as a cofactor.

Functionally, accelerates the degradation of transcripts by removing pyrophosphate from the 5'-end of triphosphorylated RNA, leading to a more labile monophosphorylated state that can stimulate subsequent ribonuclease cleavage. The protein is RNA pyrophosphohydrolase of Rhodospirillum rubrum (strain ATCC 11170 / ATH 1.1.1 / DSM 467 / LMG 4362 / NCIMB 8255 / S1).